Reading from the N-terminus, the 242-residue chain is Octanoyltransferase (242 aa).

The BPL/LPL catalytic domain maps to 31 to 206; it reads SQTTDEIWFL…LFLKNFGYNQ (176 aa). Substrate-binding positions include 70–77, 137–139, and 150–152; these read RGGQVTYH, SIG, and GLA. Cys-168 serves as the catalytic Acyl-thioester intermediate.

Belongs to the LipB family.

The protein resides in the cytoplasm. The enzyme catalyses octanoyl-[ACP] + L-lysyl-[protein] = N(6)-octanoyl-L-lysyl-[protein] + holo-[ACP] + H(+). It participates in protein modification; protein lipoylation via endogenous pathway; protein N(6)-(lipoyl)lysine from octanoyl-[acyl-carrier-protein]: step 1/2. Its function is as follows. Catalyzes the transfer of endogenously produced octanoic acid from octanoyl-acyl-carrier-protein onto the lipoyl domains of lipoate-dependent enzymes. Lipoyl-ACP can also act as a substrate although octanoyl-ACP is likely to be the physiological substrate. In Coxiella burnetii (strain CbuK_Q154) (Coxiella burnetii (strain Q154)), this protein is Octanoyltransferase.